A 308-amino-acid chain; its full sequence is Tyramine--L-glutamate ligase (308 aa).

Residues 89–291 (KSLLKSENID…LAELLIKNAN (203 aa)) enclose the ATP-grasp domain. 115–192 (TKIIESYPVK…QEFIDGENLS (78 aa)) is an ATP binding site. The Mg(2+) site is built by D252, E264, and N266. D252, E264, and N266 together coordinate Mn(2+).

Requires Mg(2+) as cofactor. Mn(2+) serves as cofactor.

The enzyme catalyses tyramine + L-glutamate + ATP = gamma-L-glutamyltyramine + ADP + phosphate + H(+). It functions in the pathway cofactor biosynthesis; methanofuran biosynthesis. Its function is as follows. Catalyzes the formation of an amide bond between tyramine and the gamma carboxy group of L-glutamate. The enzyme also accepts phenylethylamine in vitro. The polypeptide is Tyramine--L-glutamate ligase (mfnD) (Methanocaldococcus jannaschii (strain ATCC 43067 / DSM 2661 / JAL-1 / JCM 10045 / NBRC 100440) (Methanococcus jannaschii)).